The following is a 71-amino-acid chain: Large ribosomal subunit protein bL31 (71 aa).

Zn(2+)-binding residues include Cys-16, Cys-18, Cys-38, and Cys-41.

It belongs to the bacterial ribosomal protein bL31 family. Type A subfamily. Part of the 50S ribosomal subunit. Requires Zn(2+) as cofactor.

In terms of biological role, binds the 23S rRNA. The polypeptide is Large ribosomal subunit protein bL31 (Francisella tularensis subsp. mediasiatica (strain FSC147)).